A 413-amino-acid chain; its full sequence is MTLTISDLPRDLKKKIFSRIPLRYVRALRLTCKEWETLIKSRSLKIDEEESQMVALMDYNLCLMSKSFNGGDPSTEIKGKLTCFDEQVKVSMLFHCEGLLLCILKDDNTKVVVWNPYLGQRRFIQVRFSHIPGGWDQFSYALGYYKNNNMMKSFKLLRFFDYFYTSNDFVFYEIYDFDSGLWKTLDVTPYWRIRFFDDIGVSLKGNTYWCAKERKPEWNADPFIIVDHIICFDFTSERFGPLVPLPFRAMKESLVTLSCVREEKLAALFCRDVVVEVWITTTIEFDKVSWSKFLTFGVRDCPMIYSCTGSFFIDEVNKVAVIFGQPLKRDKVFIIGEAGQVRDVDLGEPAHQDSWLYVCPYVPSLVKIKQPPGCKRRRQSSSENRRYKRNMMRLVELEKYHIAMEPKRGDKTI.

Residues 2–53 form the F-box domain; that stretch reads TLTISDLPRDLKKKIFSRIPLRYVRALRLTCKEWETLIKSRSLKIDEEESQM. Kelch repeat units lie at residues 156 to 202 and 331 to 379; these read LLRF…IGVS and KVFI…RRRQ.

The sequence is that of Putative F-box/kelch-repeat protein At3g22870 from Arabidopsis thaliana (Mouse-ear cress).